We begin with the raw amino-acid sequence, 367 residues long: Auxin efflux carrier component 8 (367 aa).

Topologically, residues 1–6 (MISWLD) are extracellular. Residues 7-27 (IYHVVSATVPLYVSMTLGFLS) form a helical membrane-spanning segment. Topologically, residues 28–38 (ARHLKLFSPEQ) are cytoplasmic. The helical transmembrane segment at 39–59 (CAGINKFVAKFSIPLLSFQII) threads the bilayer. Ile51 is a (indol-3-yl)acetate binding site. The Extracellular segment spans residues 60 to 69 (SENNPFKMSP). Residues 70 to 90 (KLILSDILQKFLVVVVLAMVL) form a helical membrane-spanning segment. The Cytoplasmic segment spans residues 91–105 (RFWHPTGGRGGKLGW). The chain crosses the membrane as a helical span at residues 106–126 (VITGLSISVLPNTLILGMPIL). 2 residues coordinate (indol-3-yl)acetate: Asn117 and Leu119. Over 127-136 (SAIYGDEAAS) the chain is Extracellular. The chain crosses the membrane as a helical span at residues 137 to 157 (ILEQIVVLQSLIWYTILLFLF). A (indol-3-yl)acetate-binding site is contributed by Tyr150. Over 158–227 (ELNAARALPS…LIINPNTYAT (70 aa)) the chain is Cytoplasmic. Residues 168 to 194 (SGASLEHTGNDQEEANIEDEPKEEEDE) form a disordered region. Over residues 178-194 (DQEEANIEDEPKEEEDE) the composition is skewed to acidic residues. A helical transmembrane segment spans residues 228 to 248 (LIGIIWATLHFRLGWNLPEMI). Residues 249–251 (DKS) lie on the Extracellular side of the membrane. A helical transmembrane segment spans residues 252 to 272 (IHLLSDGGLGMAMFSLGLFMA). The Cytoplasmic portion of the chain corresponds to 273–288 (SQSSIIACGTKMAIIT). Residues 289 to 309 (MLLKFVLGPALMIASAYCIRL) form a helical membrane-spanning segment. Topologically, residues 310–312 (KST) are extracellular. The chain crosses the membrane as a helical span at residues 313 to 333 (LFKVAILQAALPQGVVPFVFA). (indol-3-yl)acetate contacts are provided by Val327 and Val328. At 334-344 (KEYNLHPEIIS) the chain is on the cytoplasmic side. A helical transmembrane segment spans residues 345-365 (TGVIFGMLIALPTTLAYYFLL). Over 366-367 (DL) the chain is Extracellular.

It belongs to the auxin efflux carrier (TC 2.A.69.1) family. Homodimer. Expressed in veins of mature leaves. Strongly expressed in pollen.

The protein resides in the endoplasmic reticulum membrane. Its subcellular location is the cell membrane. Auxin efflux carrier activity is competitively inhibited by naptalamate (N-1-naphthylphthalamic acid, NPA). In terms of biological role, acts as a component of the auxin efflux carrier. Component of the intracellular auxin-transport pathway in the male gametophyte. Involved in the regulation of auxin homeostasis in pollen. Involved in the efflux of auxin from the endoplasmic reticulum into the cytoplasm. Binds auxins including indole-3-acetic acid (IAA), naphthaleneacetic acid (NAA) and the herbicide 2,4-dichlorophenoxyacetic acid (2,4-D), but barely indole-3-butyric acid (IBA) and 2-phenylacetic acid (PAA). PIN5 and PIN8 may have an antagonistic/compensatory activity. Involved in the control of vein patterning. Redundantly with PIN6, inhibits the vein-formation-promoting functions of PIN5. PIN5, PIN6, and PIN8 control vein network geometry, but they are expressed in mutually exclusive domains of leaf vascular cells. This is Auxin efflux carrier component 8 from Arabidopsis thaliana (Mouse-ear cress).